The primary structure comprises 201 residues: tRNA (guanine-N(7)-)-methyltransferase (201 aa).

Glu-33, Glu-58, Asp-85, and Asp-106 together coordinate S-adenosyl-L-methionine. The active site involves Asp-106. Substrate contacts are provided by residues Lys-110, Asp-142, and 180–183 (TTYE).

The protein belongs to the class I-like SAM-binding methyltransferase superfamily. TrmB family.

The enzyme catalyses guanosine(46) in tRNA + S-adenosyl-L-methionine = N(7)-methylguanosine(46) in tRNA + S-adenosyl-L-homocysteine. It participates in tRNA modification; N(7)-methylguanine-tRNA biosynthesis. Functionally, catalyzes the formation of N(7)-methylguanine at position 46 (m7G46) in tRNA. This chain is tRNA (guanine-N(7)-)-methyltransferase, found in Mesomycoplasma hyopneumoniae (strain 7448) (Mycoplasma hyopneumoniae).